A 93-amino-acid polypeptide reads, in one-letter code: Cobalt transport protein CbiN (93 aa).

2 consecutive transmembrane segments (helical) span residues 5 to 25 and 63 to 83; these read LILL…NHGG and LLFT…LGYA.

This sequence belongs to the CbiN family. Forms an energy-coupling factor (ECF) transporter complex composed of an ATP-binding protein (A component, CbiO), a transmembrane protein (T component, CbiQ) and 2 possible substrate-capture proteins (S components, CbiM and CbiN) of unknown stoichimetry.

It is found in the cell inner membrane. Its pathway is cofactor biosynthesis; adenosylcobalamin biosynthesis. Part of the energy-coupling factor (ECF) transporter complex CbiMNOQ involved in cobalt import. The protein is Cobalt transport protein CbiN of Klebsiella pneumoniae (strain 342).